The following is a 391-amino-acid chain: Origin recognition complex subunit 2 (391 aa).

A disordered region spans residues 1 to 43 (MEEYTDSGEDKNVYSDDDNDYFTASTQNNRTSKNTDSSPLDPK). Over residues 22–38 (FTASTQNNRTSKNTDSS) the composition is skewed to polar residues.

It belongs to the ORC2 family. ORC is composed of six subunits.

The protein resides in the nucleus. In terms of biological role, component of the origin recognition complex (ORC) that binds origins of replication. DNA-binding is ATP-dependent, however specific DNA sequences that define origins of replication have not been identified so far. ORC is required to assemble the pre-replication complex necessary to initiate DNA replication. The polypeptide is Origin recognition complex subunit 2 (orcB) (Dictyostelium discoideum (Social amoeba)).